Here is a 357-residue protein sequence, read N- to C-terminus: UDP-N-acetylglucosamine--N-acetylmuramyl-(pentapeptide) pyrophosphoryl-undecaprenol N-acetylglucosamine transferase (357 aa).

UDP-N-acetyl-alpha-D-glucosamine-binding positions include 12 to 14 (TGG), asparagine 124, arginine 162, serine 190, isoleucine 244, 263 to 268 (ALTVAE), and glutamine 289.

Belongs to the glycosyltransferase 28 family. MurG subfamily.

It localises to the cell inner membrane. It carries out the reaction di-trans,octa-cis-undecaprenyl diphospho-N-acetyl-alpha-D-muramoyl-L-alanyl-D-glutamyl-meso-2,6-diaminopimeloyl-D-alanyl-D-alanine + UDP-N-acetyl-alpha-D-glucosamine = di-trans,octa-cis-undecaprenyl diphospho-[N-acetyl-alpha-D-glucosaminyl-(1-&gt;4)]-N-acetyl-alpha-D-muramoyl-L-alanyl-D-glutamyl-meso-2,6-diaminopimeloyl-D-alanyl-D-alanine + UDP + H(+). Its pathway is cell wall biogenesis; peptidoglycan biosynthesis. Cell wall formation. Catalyzes the transfer of a GlcNAc subunit on undecaprenyl-pyrophosphoryl-MurNAc-pentapeptide (lipid intermediate I) to form undecaprenyl-pyrophosphoryl-MurNAc-(pentapeptide)GlcNAc (lipid intermediate II). This Alkalilimnicola ehrlichii (strain ATCC BAA-1101 / DSM 17681 / MLHE-1) protein is UDP-N-acetylglucosamine--N-acetylmuramyl-(pentapeptide) pyrophosphoryl-undecaprenol N-acetylglucosamine transferase.